The following is a 347-amino-acid chain: Quinolinate synthase (347 aa).

The iminosuccinate site is built by His-47 and Ser-68. Cys-113 is a [4Fe-4S] cluster binding site. Residues 139-141 and Ser-156 contribute to the iminosuccinate site; that span reads YAN. Position 200 (Cys-200) interacts with [4Fe-4S] cluster. Iminosuccinate contacts are provided by residues 226–228 and Thr-243; that span reads HPE. Cys-297 is a binding site for [4Fe-4S] cluster.

Belongs to the quinolinate synthase family. Type 1 subfamily. It depends on [4Fe-4S] cluster as a cofactor.

It localises to the cytoplasm. It carries out the reaction iminosuccinate + dihydroxyacetone phosphate = quinolinate + phosphate + 2 H2O + H(+). The protein operates within cofactor biosynthesis; NAD(+) biosynthesis; quinolinate from iminoaspartate: step 1/1. In terms of biological role, catalyzes the condensation of iminoaspartate with dihydroxyacetone phosphate to form quinolinate. This is Quinolinate synthase from Shigella boydii serotype 18 (strain CDC 3083-94 / BS512).